Reading from the N-terminus, the 393-residue chain is Staphopain B (393 aa).

Positions M1–A36 are cleaved as a signal peptide. Residues D37–E219 constitute a propeptide that is removed on maturation. Active-site residues include C243, H340, and N360.

The protein belongs to the peptidase C47 family. As to quaternary structure, in the cytoplasm, prematurely activated/folded SspB forms a stable non-covalent complex with SspC. Proteolytically cleaved by staphylococcal serine protease (SspA).

The protein localises to the secreted. Prematurely activated/folded staphopain B is inhibited by staphostatin B (SspC), which is probably required to protect staphylococcal cytoplasmic proteins from degradation by SspB. Its function is as follows. Cysteine protease that plays an important role in the inhibition of host innate immune response. Degrades host elastin, fibrogen, fibronectin and kininogen. Blocks phagocytosis of opsonised S.aureus by neutrophils and monocytes by inducing their death in a proteolytic activity-dependent manner. Decreases surface expression of the 'don't eat me' signal CD31 on neutrophils. Cleaves host galectin-3/LGALS3, thereby inhibiting the neutrophil-activating ability of the lectin. The polypeptide is Staphopain B (sspB) (Staphylococcus aureus (strain Mu50 / ATCC 700699)).